A 172-amino-acid chain; its full sequence is Translocator protein 2 (172 aa).

Transmembrane regions (helical) follow at residues 3-23 (PQGAIFVALPHLGPILVSLLT), 45-65 (VLLAGWITIYFVMGYASYLVW), 80-100 (LGLYAVQLAVSWAVLIFFFAA), 104-124 (GLALLHMLLLYGLVVSTALIW), and 130-150 (LAAVLLLPYLAWLTVTASIAY).

This sequence belongs to the TspO/BZRP family. In terms of assembly, homotetramer. May also form homodimer. Expressed in erythrocytes (at protein level).

It is found in the endoplasmic reticulum membrane. It localises to the cell membrane. In terms of biological role, cholesterol-binding protein involved in the redistribution of cholesterol from lipid droplets to the endoplasmic reticulum. Required to meet cholesterol demands during erythropoietic differentiation. May play a role in transport processes at the plasma membrane of erythrocytes, including regulating VDAC-mediated ATP export, and import of the heme precursors protoporphyrin IX and 5-aminolevulinic acid. The chain is Translocator protein 2 from Canis lupus familiaris (Dog).